The primary structure comprises 107 residues: Large ribosomal subunit protein uL24 (107 aa).

It belongs to the universal ribosomal protein uL24 family. Part of the 50S ribosomal subunit.

One of two assembly initiator proteins, it binds directly to the 5'-end of the 23S rRNA, where it nucleates assembly of the 50S subunit. In terms of biological role, one of the proteins that surrounds the polypeptide exit tunnel on the outside of the subunit. The protein is Large ribosomal subunit protein uL24 of Thiobacillus denitrificans (strain ATCC 25259 / T1).